The sequence spans 369 residues: MTKAPVTPERDIAASGPYALAVDAMGGDRAPDIVLAGLDLAADRHPKARILLIGDEALLRPALAKYPKAARLCDIRHAAASISMDMKPTAALRVRGSSMRMAMEAVAAGEACGVVSAGNSGAMLALAKIIVKALPGISRPAMIAVEPSARGDIVMLDLGANIACDARNLVEFAIMGEAFAQAALGLPSPTIGLLNVGSEELKGDDRLRQASERLRASPLAPQFHGFVEGHDITAGTTDVVVTDGFTGNVALKTGEGALKLAFSLLKRVFQTNLLTRLGYLLVKPGLERMREWIDPRRYNGALFVGLNGIVVKSHGGADGESFAAAVDVAMDAVTHHLNDKIRARLEQLGMGAPEPVAPAAAKAAPEPVS.

Belongs to the PlsX family. As to quaternary structure, homodimer. Probably interacts with PlsY.

The protein resides in the cytoplasm. It catalyses the reaction a fatty acyl-[ACP] + phosphate = an acyl phosphate + holo-[ACP]. It functions in the pathway lipid metabolism; phospholipid metabolism. Catalyzes the reversible formation of acyl-phosphate (acyl-PO(4)) from acyl-[acyl-carrier-protein] (acyl-ACP). This enzyme utilizes acyl-ACP as fatty acyl donor, but not acyl-CoA. The polypeptide is Phosphate acyltransferase (Gluconobacter oxydans (strain 621H) (Gluconobacter suboxydans)).